Reading from the N-terminus, the 445-residue chain is Probable glycine dehydrogenase (decarboxylating) subunit 1 (445 aa).

Belongs to the GcvP family. N-terminal subunit subfamily. In terms of assembly, the glycine cleavage system is composed of four proteins: P, T, L and H. In this organism, the P 'protein' is a heterodimer of two subunits.

It catalyses the reaction N(6)-[(R)-lipoyl]-L-lysyl-[glycine-cleavage complex H protein] + glycine + H(+) = N(6)-[(R)-S(8)-aminomethyldihydrolipoyl]-L-lysyl-[glycine-cleavage complex H protein] + CO2. In terms of biological role, the glycine cleavage system catalyzes the degradation of glycine. The P protein binds the alpha-amino group of glycine through its pyridoxal phosphate cofactor; CO(2) is released and the remaining methylamine moiety is then transferred to the lipoamide cofactor of the H protein. In Anaeromyxobacter sp. (strain Fw109-5), this protein is Probable glycine dehydrogenase (decarboxylating) subunit 1.